A 116-amino-acid polypeptide reads, in one-letter code: Peptidyl-tRNA hydrolase (116 aa).

Belongs to the PTH2 family.

The protein localises to the cytoplasm. The enzyme catalyses an N-acyl-L-alpha-aminoacyl-tRNA + H2O = an N-acyl-L-amino acid + a tRNA + H(+). In terms of biological role, the natural substrate for this enzyme may be peptidyl-tRNAs which drop off the ribosome during protein synthesis. The polypeptide is Peptidyl-tRNA hydrolase (Methanococcus vannielii (strain ATCC 35089 / DSM 1224 / JCM 13029 / OCM 148 / SB)).